A 398-amino-acid chain; its full sequence is Cytochrome b (398 aa).

The helical transmembrane segment at 45–65 threads the bilayer; the sequence is LGSIAGIALVIQIITGVILAM. Heme b contacts are provided by H95 and H109. Helical transmembrane passes span 96–116, 129–149, 164–184, 192–212, 245–265, 277–297, 304–324, 339–359, and 366–386; these read AVGA…GLYY, IGII…VLPW, FSAI…GFSV, FFSL…LHLV, FVGF…EPNY, PLVT…YAIL, LGGV…PWLD, MAFW…GQPA, and ISRF…PLIG. The heme b site is built by H196 and H210.

It belongs to the cytochrome b family. The main subunits of complex b-c1 are: cytochrome b, cytochrome c1 and the Rieske protein. Heme b is required as a cofactor.

Its subcellular location is the cell membrane. Its function is as follows. Component of the ubiquinol-cytochrome c reductase complex (complex III or cytochrome b-c1 complex), which is a respiratory chain that generates an electrochemical potential coupled to ATP synthesis. This Rickettsia conorii (strain ATCC VR-613 / Malish 7) protein is Cytochrome b (petB).